The sequence spans 500 residues: uncharacterized protein (500 aa).

This is an uncharacterized protein from Halorubrum sp. PV6 (HRPV-1).